A 434-amino-acid chain; its full sequence is MSLPGSKLEEARRLVNEKQYNEAEQVYLSLLDKDSSQSSAAAGASVDDKRRNEQETSILELGQLYVTMGAKDKLREFIPHSTEYMMQFAKSKTVKVLKTLIEKFEQVPDSLDDQIFVCEKSIEFAKREKRVFLKHSLSIKLATLHYQKKQYKDSLALINDLLREFKKLDDKPSLVDVHLLESKVYHKLRNLAKSKASLTAARTAANSIYCPTQTVAELDLMSGILHCEDKDYKTAFSYFFESFESYHNLTTHNSYEKACQVLKYMLLSKIMLNLIDDVKNILNAKYTKETYQSRGIDAMKAVAEAYNNRSLLDFNTALKQYEKELMGDELTRSHFNALYDTLLESNLCKIIEPFECVEISHISKIIGLDTQQVEGKLSQMILDKIFYGVLDQGNGWLYVYETPNQDATYDSALELVGQLNKVVDQLFEKASVLY.

The residue at position 2 (Ser2) is an N-acetylserine. The PCI domain maps to 235 to 404; it reads AFSYFFESFE…GWLYVYETPN (170 aa).

This sequence belongs to the proteasome subunit S9 family. As to quaternary structure, component of the lid subcomplex of the 19S proteasome regulatory particle complex (also named PA700 complex). The 26S proteasome consists of a 20S proteasome core and two 19S regulatory subunits. N-acetylated by NAT1.

Component of the lid subcomplex of the 26S proteasome, a multiprotein complex involved in the ATP-dependent degradation of ubiquitinated proteins. In the complex, RPN6 is required for proteasome assembly. The protein is 26S proteasome regulatory subunit RPN6 (RPN6) of Saccharomyces cerevisiae (strain ATCC 204508 / S288c) (Baker's yeast).